We begin with the raw amino-acid sequence, 251 residues long: HTH-type transcriptional regulator UlaR (251 aa).

Residues 3 to 58 (EAQRHQILLEMLAQLGFVTVEKVVERLGISPATARRDINKLGESGKLKKVRNGAEA) enclose the HTH deoR-type domain. The H-T-H motif DNA-binding region spans 20–39 (VTVEKVVERLGISPATARRD).

It localises to the cytoplasm. In terms of biological role, represses ulaG and the ulaABCDEF operon. In Shigella flexneri, this protein is HTH-type transcriptional regulator UlaR.